A 720-amino-acid chain; its full sequence is MIIVKVVLPLPIRKYFKYFMPDSMCPIIGGRIVVPFRSKDIVGIVISFCNKKNISNLNLAFVKSCIDTESIYSDVVFSILIWLSRYYYFPIGSIFFSILPKYLKKICLIDNKNYKFAILRKTKYKDFKTFNLLFFCKKKSFIDKDLEKYTFFDFFLKKNFLQKSCKNYFYHENIPHIYQNYLIKKKFFLNKKIIFIINKILMKNCFTSWLITKNNFYLKVKFYLGLIKECLSKNLQILILVPFVKDIYQILFFLKKYFNVYIDIIHSQLNNEDYLKKWIRTKSGKNSIIIGTKNSVFFPFLKLGLIIVNQEHHLNYRNLDQCRYNVRDIAILRAYKQNIPIILDSDTPSLRTLYNILHKKCFYIKFIKNKKTFFLKNNVIDLRKERIKIGLSSTLINEIFNNIQKNYPVLLVLNKFSFVFFGLICRRCGKIEKCHICNDYFETKKYDNFLFCRNCLIKIKKPLFCYNCKNFSLIVFDFGIKKIKNSFKKIFPNINLFFLLSLKKNKTKKLKIQFFKFPISNACIIITTEKISQHYYFPYVRFIALTNVDHYFFSFHFCSIEHFLQFYFNLINLTGENKKLLKIFIQTSYPNNKFLLNLCSSDYFLFCRKILSLRKKYFLPPWNFQVIFYSSSKFFEKSFIFLECIQIILKKQSKRDNVSLWFVGPHPVFSLKDRKKCFYQLLIHSPSRTYLKKILKESINIVQCFSISQNVQWFLDIDIY.

Positions 200–366 (ILMKNCFTSW…LHKKCFYIKF (167 aa)) constitute a Helicase ATP-binding domain. 213–220 (KNNFYLKV) contacts ATP. Residues 309–312 (NQEH) carry the DEAH box motif. Zn(2+)-binding residues include Cys425, Cys428, Cys434, Cys437, Cys452, Cys455, Cys465, and Cys468.

This sequence belongs to the helicase family. PriA subfamily. Component of the replication restart primosome. Requires Zn(2+) as cofactor.

It catalyses the reaction Couples ATP hydrolysis with the unwinding of duplex DNA by translocating in the 3'-5' direction.. It carries out the reaction ATP + H2O = ADP + phosphate + H(+). In terms of biological role, initiates the restart of stalled replication forks, which reloads the replicative helicase on sites other than the origin of replication. Recognizes and binds to abandoned replication forks and remodels them to uncover a helicase loading site. Promotes assembly of the primosome at these replication forks. In Buchnera aphidicola subsp. Schizaphis graminum (strain Sg), this protein is Replication restart protein PriA.